The sequence spans 89 residues: UPF0335 protein Nwi_0989 (89 aa).

This sequence belongs to the UPF0335 family.

The protein is UPF0335 protein Nwi_0989 of Nitrobacter winogradskyi (strain ATCC 25391 / DSM 10237 / CIP 104748 / NCIMB 11846 / Nb-255).